A 283-amino-acid chain; its full sequence is Phytanoyl-CoA dioxygenase (283 aa).

2-oxoglutarate contacts are provided by residues Lys99, Met138, 153–155, and Trp170; that span reads HQD. Fe cation-binding residues include His153 and Asp155. Position 238 (His238) interacts with Fe cation. 2-oxoglutarate is bound by residues Ser240 and Arg249.

Belongs to the PhyH family. Requires Fe cation as cofactor. It depends on L-ascorbate as a cofactor.

The catalysed reaction is phytanoyl-CoA + 2-oxoglutarate + O2 = 2-hydroxyphytanoyl-CoA + succinate + CO2. It participates in lipid metabolism; fatty acid metabolism. Its function is as follows. Converts phytanoyl-CoA to 2-hydroxyphytanoyl-CoA. This Arabidopsis thaliana (Mouse-ear cress) protein is Phytanoyl-CoA dioxygenase.